The following is a 576-amino-acid chain: Immunoglobulin mu heavy chain (576 aa).

Glutamine 1 is modified (pyrrolidone carboxylic acid). Ig-like domains follow at residues 1-97 (QVTL…TYYC), 132-212 (PTLF…EHVC), 236-334 (PKVS…QNAS), 352-442 (PSFA…QTIS), and 452-553 (PDVY…RTVD). The segment at 1–124 (QVTLTESGPA…VWGKGTTVTV (124 aa)) is variable (V) domain, involved in antigen recognition. 3 disulfides stabilise this stretch: cysteine 22–cysteine 97, cysteine 153–cysteine 212, and cysteine 259–cysteine 320. 2 N-linked (GlcNAc...) asparagine glycosylation sites follow: asparagine 74 and asparagine 170. The constant (C) domain stretch occupies residues 125–576 (SSGSASAPTL…VMSDTAGTCY (452 aa)). Residues asparagine 332, asparagine 395, and asparagine 402 are each glycosylated (N-linked (GlcNAc...) asparagine). 2 cysteine pairs are disulfide-bonded: cysteine 367/cysteine 426 and cysteine 474/cysteine 536. Asparagine 563 carries N-linked (GlcNAc...) asparagine glycosylation.

As to quaternary structure, immunoglobulins are composed of two identical heavy chains and two identical light chains; disulfide-linked. It is found almost exclusively as a homopentamer in the serum. Membrane-bound IgM molecules are non-covalently associated with heterodimer of CD79A and CD79B.

The protein localises to the secreted. It localises to the cell membrane. Immunoglobulins, also known as antibodies, are membrane-bound or secreted glycoproteins produced by B lymphocytes. In the recognition phase of humoral immunity, the membrane-bound immunoglobulins serve as receptors which, upon binding of a specific antigen, trigger the clonal expansion and differentiation of B lymphocytes into immunoglobulins-secreting plasma cells. Secreted immunoglobulins mediate the effector phase of humoral immunity, which results in the elimination of bound antigens. The antigen binding site is formed by the variable domain of one heavy chain, together with that of its associated light chain. Thus, each immunoglobulin has two antigen binding sites with remarkable affinity for a particular antigen. The variable domains are assembled by a process called V-(D)-J rearrangement and can then be subjected to somatic hypermutations which, after exposure to antigen and selection, allow affinity maturation for a particular antigen. IgM antibodies play an important role in primary defense mechanisms. They have been shown to be involved in early recognition of external invaders like bacteria and viruses, cellular waste and modified self, as well as in recognition and elimination of precancerous and cancerous lesions. The membrane-bound form is found in the majority of normal B cells alongside with IgD. Membrane-bound IgM induces the phosphorylation of CD79A and CD79B by the Src family of protein tyrosine kinases. It may cause death of cells by apoptosis. It is also found in soluble form, which represents about 30% of the total serum immunoglobulins where it is found almost exclusively as a homopentamer. After the antigen binds to the B cell receptor, the secreted form is secreted in large amounts (, PubMed:16895553). The sequence is that of Immunoglobulin mu heavy chain from Homo sapiens (Human).